Reading from the N-terminus, the 85-residue chain is Large ribosomal subunit protein bL27 (85 aa).

Gly residues predominate over residues 1-10; sequence MAQKKGGGST. The tract at residues 1–20 is disordered; sequence MAQKKGGGSTRNGRDSKPKM.

This sequence belongs to the bacterial ribosomal protein bL27 family.

In Delftia acidovorans (strain DSM 14801 / SPH-1), this protein is Large ribosomal subunit protein bL27.